The sequence spans 115 residues: Hydrogenase maturation factor HypA (115 aa).

Ni(2+) is bound at residue histidine 2. Zn(2+) contacts are provided by cysteine 73, cysteine 76, cysteine 89, and cysteine 92.

This sequence belongs to the HypA/HybF family.

Functionally, involved in the maturation of [NiFe] hydrogenases. Required for nickel insertion into the metal center of the hydrogenase. The sequence is that of Hydrogenase maturation factor HypA from Shewanella halifaxensis (strain HAW-EB4).